A 414-amino-acid chain; its full sequence is Tyrosine--tRNA ligase (414 aa).

L-tyrosine is bound at residue Y35. Positions 40-49 (PTADSLHVGH) match the 'HIGH' region motif. 2 residues coordinate L-tyrosine: Y164 and Q168. Residues 226–230 (KFGKT) carry the 'KMSKS' region motif. K229 contacts ATP. The 68-residue stretch at 347–414 (TKVIDALVEL…KKKYFVILVK (68 aa)) folds into the S4 RNA-binding domain.

Belongs to the class-I aminoacyl-tRNA synthetase family. TyrS type 1 subfamily. Homodimer.

The protein localises to the cytoplasm. The catalysed reaction is tRNA(Tyr) + L-tyrosine + ATP = L-tyrosyl-tRNA(Tyr) + AMP + diphosphate + H(+). Its function is as follows. Catalyzes the attachment of tyrosine to tRNA(Tyr) in a two-step reaction: tyrosine is first activated by ATP to form Tyr-AMP and then transferred to the acceptor end of tRNA(Tyr). The protein is Tyrosine--tRNA ligase of Mycoplasma capricolum subsp. capricolum (strain California kid / ATCC 27343 / NCTC 10154).